A 452-amino-acid chain; its full sequence is Pup--protein ligase (452 aa).

Mg(2+) is bound at residue glutamate 9. Arginine 53 contacts ATP. Residue tyrosine 55 coordinates Mg(2+). Catalysis depends on aspartate 57, which acts as the Proton acceptor. Glutamate 63 lines the Mg(2+) pocket. The ATP site is built by threonine 66 and tryptophan 419.

It belongs to the Pup ligase/Pup deamidase family. Pup-conjugating enzyme subfamily.

The catalysed reaction is ATP + [prokaryotic ubiquitin-like protein]-L-glutamate + [protein]-L-lysine = ADP + phosphate + N(6)-([prokaryotic ubiquitin-like protein]-gamma-L-glutamyl)-[protein]-L-lysine.. It participates in protein degradation; proteasomal Pup-dependent pathway. The protein operates within protein modification; protein pupylation. Its function is as follows. Catalyzes the covalent attachment of the prokaryotic ubiquitin-like protein modifier Pup to the proteasomal substrate proteins, thereby targeting them for proteasomal degradation. This tagging system is termed pupylation. The ligation reaction involves the side-chain carboxylate of the C-terminal glutamate of Pup and the side-chain amino group of a substrate lysine. The polypeptide is Pup--protein ligase (Saccharomonospora viridis (strain ATCC 15386 / DSM 43017 / JCM 3036 / CCUG 5913 / NBRC 12207 / NCIMB 9602 / P101) (Thermoactinomyces viridis)).